We begin with the raw amino-acid sequence, 236 residues long: MQSELQRGFVLHRRPYSETSLLVDLFTEESGRLTVIAKGARAKRSSWKSVLQPFTPLLLRWTGKSTLKTLAKAEPAAITLPLQQIALYSGFYVNELLTRVIESETPNPALFQHYLKCLTGLATETNIEPTLRLFEFQLLQILGYGVDFLHCAGSGEPVDFSMTYRYREEKGFIASLVKDNLTFYGRDLLAFEALDFSDDAVRQAAKRFTRIALKPYLGDKPLKSRELFTQNILLLK.

Belongs to the RecO family.

Its function is as follows. Involved in DNA repair and RecF pathway recombination. The polypeptide is DNA repair protein RecO (Haemophilus influenzae (strain PittGG)).